The following is a 267-amino-acid chain: Energy-coupling factor transporter transmembrane protein EcfT (267 aa).

5 consecutive transmembrane segments (helical) span residues 26-46, 73-93, 116-136, 151-171, and 247-267; these read IILT…WGYL, ILFI…GTVI, LFLL…IALT, VPVH…PTLL, and LVTG…YVFF.

This sequence belongs to the energy-coupling factor EcfT family. As to quaternary structure, forms a stable energy-coupling factor (ECF) transporter complex composed of 2 membrane-embedded substrate-binding proteins (S component), 2 ATP-binding proteins (A component) and 2 transmembrane proteins (T component). May be able to interact with more than 1 S component at a time.

The protein resides in the cell membrane. In terms of biological role, transmembrane (T) component of an energy-coupling factor (ECF) ABC-transporter complex. Unlike classic ABC transporters this ECF transporter provides the energy necessary to transport a number of different substrates. The polypeptide is Energy-coupling factor transporter transmembrane protein EcfT (Ruminiclostridium cellulolyticum (strain ATCC 35319 / DSM 5812 / JCM 6584 / H10) (Clostridium cellulolyticum)).